Reading from the N-terminus, the 571-residue chain is Glutamine--tRNA ligase (571 aa).

A 'HIGH' region motif is present at residues 35-45; the sequence is PEPNGYLHIGH. Residues 36–38 and 42–48 each bind ATP; these read EPN and HIGHAKS. 2 residues coordinate L-glutamine: D68 and Y213. Residues T232, 262 to 263, and 270 to 272 contribute to the ATP site; these read RL and LSK. Positions 269–273 match the 'KMSKS' region motif; it reads ILSKR.

Belongs to the class-I aminoacyl-tRNA synthetase family. In terms of assembly, monomer.

The protein resides in the cytoplasm. The enzyme catalyses tRNA(Gln) + L-glutamine + ATP = L-glutaminyl-tRNA(Gln) + AMP + diphosphate. The sequence is that of Glutamine--tRNA ligase from Buchnera aphidicola subsp. Acyrthosiphon pisum (strain Tuc7).